Reading from the N-terminus, the 448-residue chain is Asparagine--tRNA ligase (448 aa).

The protein belongs to the class-II aminoacyl-tRNA synthetase family. As to quaternary structure, homodimer.

It is found in the cytoplasm. It catalyses the reaction tRNA(Asn) + L-asparagine + ATP = L-asparaginyl-tRNA(Asn) + AMP + diphosphate + H(+). The sequence is that of Asparagine--tRNA ligase from Streptococcus agalactiae serotype Ia (strain ATCC 27591 / A909 / CDC SS700).